A 33-amino-acid polypeptide reads, in one-letter code: Phosphoglycerate kinase (33 aa).

K13 serves as a coordination point for AMP. K13 is a binding site for ATP.

This sequence belongs to the phosphoglycerate kinase family. As to quaternary structure, monomer. Requires Mg(2+) as cofactor.

It carries out the reaction (2R)-3-phosphoglycerate + ATP = (2R)-3-phospho-glyceroyl phosphate + ADP. The protein is Phosphoglycerate kinase of Pseudotsuga menziesii (Douglas-fir).